A 217-amino-acid polypeptide reads, in one-letter code: Membrane-associated progesterone receptor component 2 (217 aa).

O-linked (Xyl...) (chondroitin sulfate) serine glycosylation occurs at serine 15. The chain crosses the membrane as a helical span at residues 40-62 (ALLATGGEMLLNVALVALVLLGA). Phosphoserine is present on residues serine 84, serine 98, and serine 202. The Cytochrome b5 heme-binding domain maps to 96-195 (DFSLEQLRQY…EKYDYVGRLL (100 aa)). The segment at 196 to 217 (KPGEEPSEYTDEEDTKDHSKQD) is disordered. Positions 200–209 (EPSEYTDEED) are enriched in acidic residues. The residue at position 204 (tyrosine 204) is a Phosphotyrosine. At threonine 205 the chain carries Phosphothreonine.

The protein belongs to the cytochrome b5 family. MAPR subfamily. Interacts with PGRMC1. Interacts with AAAS. Expressed in brown adipose tissue, white adipose tissue, liver, heart, skeletal muscle, brain and adrenal gland.

The protein resides in the membrane. The protein localises to the nucleus envelope. It localises to the endoplasmic reticulum. It is found in the secreted. Functionally, required for the maintenance of uterine histoarchitecture and normal female reproductive lifespan. May serve as a universal non-classical progesterone receptor in the uterus. Intracellular heme chaperone required for delivery of labile, or signaling heme, to the nucleus. Plays a role in adipocyte function and systemic glucose homeostasis. In brown fat, which has a high demand for heme, delivery of labile heme in the nucleus regulates the activity of heme-responsive transcriptional repressors such as NR1D1 and BACH1. The chain is Membrane-associated progesterone receptor component 2 from Mus musculus (Mouse).